A 667-amino-acid chain; its full sequence is Probable export ATP-binding/permease protein MacB (667 aa).

The 239-residue stretch at 22 to 260 folds into the ABC transporter domain; it reads LRLAGVSRRF…PVEEVQPAAE (239 aa). An ATP-binding site is contributed by 58 to 65; it reads GASGSGKS. 4 helical membrane passes run 292 to 312, 540 to 560, 601 to 621, and 630 to 650; these read LLTMLGIIIGITSVVSISAIG, LTLLLSLIAVISLVVGGIGVM, IGGVIGIGLSYGIGYLFALFV, and LGSIVTAFVCSTLIGIVFGFV.

It belongs to the ABC transporter superfamily. Macrolide exporter (TC 3.A.1.122) family. As to quaternary structure, probably part of a tripartite efflux system, which is composed of an inner membrane transporter, a periplasmic membrane fusion protein, and an outer membrane component.

The protein resides in the cell inner membrane. In terms of biological role, probably part of a tripartite efflux system. The sequence is that of Probable export ATP-binding/permease protein MacB from Pseudomonas entomophila (strain L48).